The chain runs to 1139 residues: Protein kinase C-like (1139 aa).

The REM-1 1 domain occupies 1–67; sequence MNEDEAIQNI…LRDIQLRKVG (67 aa). Residues 72–132 are disordered; the sequence is GMSLGADDAG…PGPGAASKAR (61 aa). The REM-1 2 domain maps to 142–219; it reads KYDTPYLGPR…LKRYEELHVD (78 aa). In terms of domain architecture, C2 spans 225–343; the sequence is AQDDDSINTP…MRRKRIEAEM (119 aa). Residues 349–404 form a disordered region; the sequence is VSADRMGSTGAPSQFPMSPTSGSFGGSPQAPGGGQGQAPGPFGDPAPQPQVVTGPI. Positions 358–368 are enriched in polar residues; the sequence is GAPSQFPMSPT. 2 Phorbol-ester/DAG-type zinc fingers span residues 454-502 and 522-572; these read GHKF…VTKC and PHRF…PDFC. Disordered stretches follow at residues 590 to 637, 649 to 668, and 679 to 804; these read KQRQ…TPSA, QTSP…LSAA, and QGRT…TDPG. Positions 594-614 are enriched in polar residues; that stretch reads QKTTSLSEKTLRSGATKSPTT. Low complexity predominate over residues 615–629; it reads AGHGSSASFSSAGAG. Composition is skewed to pro residues over residues 723–734 and 743–760; these read AQPPAQQRPPQP and AQMP…PPQP. A compositionally biased stretch (low complexity) spans 761 to 793; it reads GQQYQQQQPAAQKPQPQPPATAQGAAAGPPGSQ. The 260-residue stretch at 814–1073 folds into the Protein kinase domain; it reads FNFLAVLGKG…AQEVMSQPFF (260 aa). Residues 820-828 and Lys-843 each bind ATP; that span reads LGKGNFGKV. Asp-939 acts as the Proton acceptor in catalysis. The AGC-kinase C-terminal domain occupies 1074–1139; that stretch reads RNINWDDIYH…RGFSYTADLD (66 aa).

The protein belongs to the protein kinase superfamily. AGC Ser/Thr protein kinase family. PKC subfamily.

The catalysed reaction is L-seryl-[protein] + ATP = O-phospho-L-seryl-[protein] + ADP + H(+). It carries out the reaction L-threonyl-[protein] + ATP = O-phospho-L-threonyl-[protein] + ADP + H(+). With respect to regulation, stimulated about twofold by phospholipids or phorbol esters. This chain is Protein kinase C-like (pkc1), found in Hypocrea jecorina (Trichoderma reesei).